A 361-amino-acid chain; its full sequence is Mitogen-activated protein kinase 14B (361 aa).

The region spanning 25 to 309 (YQNLSPVGSG…ASQALAHPYF (285 aa)) is the Protein kinase domain. ATP is bound by residues 31–39 (VGSGAYGSV) and Lys-54. Asp-151 functions as the Proton acceptor in the catalytic mechanism. Thr-181 bears the Phosphothreonine; by MAP2K6 mark. The short motif at 181-183 (TGY) is the TXY element. Phosphotyrosine; by MAP2K6 is present on Tyr-183.

It belongs to the protein kinase superfamily. CMGC Ser/Thr protein kinase family. MAP kinase subfamily. Mg(2+) is required as a cofactor. Post-translationally, dually phosphorylated on Thr-181 and Tyr-183, which activates the enzyme. As to expression, predominantly expressed in the ovary. Lower levels present in brain, gill, heart, spleen, kidney, muscle and gut.

The protein localises to the cytoplasm. The protein resides in the nucleus. It catalyses the reaction L-seryl-[protein] + ATP = O-phospho-L-seryl-[protein] + ADP + H(+). It carries out the reaction L-threonyl-[protein] + ATP = O-phospho-L-threonyl-[protein] + ADP + H(+). With respect to regulation, activated by threonine and tyrosine phosphorylation by the dual specificity kinase, MKK6. In terms of biological role, serine/threonine kinase which acts as an essential component of the MAP kinase signal transduction pathway. Mapk14b is one of the four p38 MAPKs which play an important role in the cascades of cellular responses evoked by extracellular stimuli such as pro-inflammatory cytokines or physical stress leading to direct activation of transcription factors. Accordingly, p38 MAPKs phosphorylate a broad range of proteins and it has been estimated that they may have approximately 200 to 300 substrates each. Some of the targets are downstream kinases which are activated through phosphorylation and further phosphorylate additional targets. This chain is Mitogen-activated protein kinase 14B (mapk14b), found in Cyprinus carpio (Common carp).